The chain runs to 321 residues: Hydropyrene synthase (321 aa).

Residues Asp82, Asn225, Ser229, and Glu233 each contribute to the Mg(2+) site. The DDxx(x)D/E motif signature appears at 82-87; sequence DDRAID. Residues 225 to 233 carry the NDxxSxxxD/E motif motif; it reads NDLHSFARE.

This sequence belongs to the terpene synthase family. Mg(2+) serves as cofactor.

It carries out the reaction (2E,6E,10E)-geranylgeranyl diphosphate = hydropyrene + diphosphate. The enzyme catalyses (2E,6E,10E)-geranylgeranyl diphosphate + H2O = hydropyrenol + diphosphate. The catalysed reaction is (2E,6E,10E)-geranylgeranyl diphosphate = isoelisabethatriene + diphosphate. Its pathway is secondary metabolite biosynthesis; terpenoid biosynthesis. Terpene synthase that catalyzes the conversion of geranylgeranyl diphosphate (GGPP) into a mixture of diterpenes, including hydropyrene (HP), hydropyrenol (HPol), isoelisabethatriene and traces of isoelisabethatriene B. Hydropyrene is the main product. Some other diterpenoids are also produced in very low quantities. This Streptomyces clavuligerus protein is Hydropyrene synthase.